The sequence spans 117 residues: MTRIKRGYIARRRRTKIRLFASSFRGAHSRLTRTITQQRIRALVSAHRDRGRKKRDFRRLWITRINAVIRGDGVSYSYNRFIHNLYKKQLLLNRKILAQIAISNRSCLYTISNEIRK.

Belongs to the bacterial ribosomal protein bL20 family.

It is found in the plastid. The protein resides in the chloroplast. In terms of biological role, binds directly to 23S ribosomal RNA and is necessary for the in vitro assembly process of the 50S ribosomal subunit. It is not involved in the protein synthesizing functions of that subunit. The protein is Large ribosomal subunit protein bL20c of Carica papaya (Papaya).